The following is a 329-amino-acid chain: Lipoyl synthase (329 aa).

Residues C55, C60, C66, C81, C85, C88, and S292 each contribute to the [4Fe-4S] cluster site. A Radical SAM core domain is found at W67–L281.

It belongs to the radical SAM superfamily. Lipoyl synthase family. [4Fe-4S] cluster serves as cofactor.

It localises to the cytoplasm. The enzyme catalyses [[Fe-S] cluster scaffold protein carrying a second [4Fe-4S](2+) cluster] + N(6)-octanoyl-L-lysyl-[protein] + 2 oxidized [2Fe-2S]-[ferredoxin] + 2 S-adenosyl-L-methionine + 4 H(+) = [[Fe-S] cluster scaffold protein] + N(6)-[(R)-dihydrolipoyl]-L-lysyl-[protein] + 4 Fe(3+) + 2 hydrogen sulfide + 2 5'-deoxyadenosine + 2 L-methionine + 2 reduced [2Fe-2S]-[ferredoxin]. The protein operates within protein modification; protein lipoylation via endogenous pathway; protein N(6)-(lipoyl)lysine from octanoyl-[acyl-carrier-protein]: step 2/2. Its function is as follows. Catalyzes the radical-mediated insertion of two sulfur atoms into the C-6 and C-8 positions of the octanoyl moiety bound to the lipoyl domains of lipoate-dependent enzymes, thereby converting the octanoylated domains into lipoylated derivatives. The polypeptide is Lipoyl synthase (Leifsonia xyli subsp. xyli (strain CTCB07)).